Reading from the N-terminus, the 22-residue chain is Alpha-amylase inhibitor DR4 (22 aa).

Residues 1 to 22 (SGGGKEAAETFNRVESHPRPDA) form a disordered region.

Inhibits insect alpha-amylases. The protein is Alpha-amylase inhibitor DR4 of Delonix regia (Royal poinciana).